Reading from the N-terminus, the 76-residue chain is Large ribosomal subunit protein bL31 (76 aa).

4 residues coordinate Zn(2+): cysteine 16, cysteine 18, cysteine 37, and cysteine 40.

This sequence belongs to the bacterial ribosomal protein bL31 family. Type A subfamily. As to quaternary structure, part of the 50S ribosomal subunit. Requires Zn(2+) as cofactor.

In terms of biological role, binds the 23S rRNA. This is Large ribosomal subunit protein bL31 from Maridesulfovibrio salexigens (strain ATCC 14822 / DSM 2638 / NCIMB 8403 / VKM B-1763) (Desulfovibrio salexigens).